A 140-amino-acid chain; its full sequence is Large ribosomal subunit protein uL11 (140 aa).

This sequence belongs to the universal ribosomal protein uL11 family. In terms of assembly, part of the ribosomal stalk of the 50S ribosomal subunit. Interacts with L10 and the large rRNA to form the base of the stalk. L10 forms an elongated spine to which L12 dimers bind in a sequential fashion forming a multimeric L10(L12)X complex. Post-translationally, one or more lysine residues are methylated.

In terms of biological role, forms part of the ribosomal stalk which helps the ribosome interact with GTP-bound translation factors. The sequence is that of Large ribosomal subunit protein uL11 from Heliobacterium modesticaldum (strain ATCC 51547 / Ice1).